The sequence spans 358 residues: UDP-N-acetylglucosamine--N-acetylmuramyl-(pentapeptide) pyrophosphoryl-undecaprenol N-acetylglucosamine transferase (358 aa).

Residues 13-15, Asn-125, Arg-162, Ser-190, Ile-244, 263-268, and Gln-289 contribute to the UDP-N-acetyl-alpha-D-glucosamine site; these read TGG and ALTVAE.

Belongs to the glycosyltransferase 28 family. MurG subfamily.

The protein localises to the cell inner membrane. It catalyses the reaction di-trans,octa-cis-undecaprenyl diphospho-N-acetyl-alpha-D-muramoyl-L-alanyl-D-glutamyl-meso-2,6-diaminopimeloyl-D-alanyl-D-alanine + UDP-N-acetyl-alpha-D-glucosamine = di-trans,octa-cis-undecaprenyl diphospho-[N-acetyl-alpha-D-glucosaminyl-(1-&gt;4)]-N-acetyl-alpha-D-muramoyl-L-alanyl-D-glutamyl-meso-2,6-diaminopimeloyl-D-alanyl-D-alanine + UDP + H(+). It functions in the pathway cell wall biogenesis; peptidoglycan biosynthesis. Functionally, cell wall formation. Catalyzes the transfer of a GlcNAc subunit on undecaprenyl-pyrophosphoryl-MurNAc-pentapeptide (lipid intermediate I) to form undecaprenyl-pyrophosphoryl-MurNAc-(pentapeptide)GlcNAc (lipid intermediate II). The protein is UDP-N-acetylglucosamine--N-acetylmuramyl-(pentapeptide) pyrophosphoryl-undecaprenol N-acetylglucosamine transferase of Halorhodospira halophila (strain DSM 244 / SL1) (Ectothiorhodospira halophila (strain DSM 244 / SL1)).